The sequence spans 226 residues: Ribosomal RNA large subunit methyltransferase E (226 aa).

The segment at 1 to 25 (MVKPPAGGNEGGRGKPARLKTAYGR) is disordered. 5 residues coordinate S-adenosyl-L-methionine: Gly-82, Trp-84, Asp-100, Asp-116, and Asp-140. The active-site Proton acceptor is the Lys-180.

Belongs to the class I-like SAM-binding methyltransferase superfamily. RNA methyltransferase RlmE family.

It localises to the cytoplasm. It carries out the reaction uridine(2552) in 23S rRNA + S-adenosyl-L-methionine = 2'-O-methyluridine(2552) in 23S rRNA + S-adenosyl-L-homocysteine + H(+). Functionally, specifically methylates the uridine in position 2552 of 23S rRNA at the 2'-O position of the ribose in the fully assembled 50S ribosomal subunit. The chain is Ribosomal RNA large subunit methyltransferase E from Caulobacter vibrioides (strain ATCC 19089 / CIP 103742 / CB 15) (Caulobacter crescentus).